Here is a 152-residue protein sequence, read N- to C-terminus: Superoxide dismutase [Cu-Zn] 2 (152 aa).

Residues Asn-9 and Asn-33 are each glycosylated (N-linked (GlcNAc...) asparagine). 3 residues coordinate Cu cation: His-45, His-47, and His-62. Cys-56 and Cys-145 are disulfide-bonded. Residues His-62, His-70, His-79, and Asp-82 each coordinate Zn(2+). Asn-85 carries N-linked (GlcNAc...) asparagine glycosylation. His-119 is a Cu cation binding site.

Belongs to the Cu-Zn superoxide dismutase family. Requires Cu cation as cofactor. Zn(2+) serves as cofactor. Expressed in fruits, leaves and pollen grains.

The protein resides in the cytoplasm. The protein localises to the endoplasmic reticulum. It carries out the reaction 2 superoxide + 2 H(+) = H2O2 + O2. Its activity is regulated as follows. Inhibited by KCN and H(2)O(2). In terms of biological role, destroys radicals which are normally produced within the cells and which are toxic to biological systems. Probably involved in the protection against oxidative stress during pollen development. This chain is Superoxide dismutase [Cu-Zn] 2 (OLE5), found in Olea europaea (Common olive).